The chain runs to 502 residues: Glycerol kinase (502 aa).

Thr14 contributes to the ADP binding site. Thr14, Thr15, and Ser16 together coordinate ATP. Residue Thr14 coordinates sn-glycerol 3-phosphate. Residue Arg18 participates in ADP binding. Sn-glycerol 3-phosphate is bound by residues Arg84, Glu85, and Tyr136. Glycerol-binding residues include Arg84, Glu85, and Tyr136. His232 carries the phosphohistidine; by HPr modification. Asp246 contributes to the sn-glycerol 3-phosphate binding site. The glycerol site is built by Asp246 and Gln247. ADP-binding residues include Thr268 and Gly311. ATP is bound by residues Thr268, Gly311, Gln315, and Gly412. 2 residues coordinate ADP: Gly412 and Asn416.

This sequence belongs to the FGGY kinase family. In terms of assembly, homotetramer and homodimer (in equilibrium). In terms of processing, the phosphoenolpyruvate-dependent sugar phosphotransferase system (PTS), including enzyme I, and histidine-containing protein (HPr) are required for the phosphorylation, which leads to the activation of the enzyme.

The catalysed reaction is glycerol + ATP = sn-glycerol 3-phosphate + ADP + H(+). It functions in the pathway polyol metabolism; glycerol degradation via glycerol kinase pathway; sn-glycerol 3-phosphate from glycerol: step 1/1. Its activity is regulated as follows. Activated by phosphorylation and inhibited by fructose 1,6-bisphosphate (FBP). Its function is as follows. Key enzyme in the regulation of glycerol uptake and metabolism. Catalyzes the phosphorylation of glycerol to yield sn-glycerol 3-phosphate. The chain is Glycerol kinase from Streptococcus pneumoniae (strain P1031).